Here is a 338-residue protein sequence, read N- to C-terminus: MRVGIVGATGQVGTVMRRILTERNFPVTELRLFASARSAGTELDGVTVEDAATADYTGLDIVLFSAGGATSKALAEKVASQGAVVIDNSSAWRKHPEVPLVVSEVNPHAIKDRPKGIIANPNCTTMAAMPVLRPLHDEAGLEALVVATYQAVSGSGLAGVAELHGQTQKVVADAEKLTHDGEAVDFPEPGVYKRPIAFNVLPLAGSIVDDGLNETDEEQKLRNESRKILEIPGLKVSGTCVRVPVFSGHSLQINARFARPISADGATELLKDAPGVELSDIPTPLQAAGKDPSYVGRIRSDETVDNGLALFVSNDNLRKGAALNAVQIAELVAAELKG.

NADP(+) is bound by residues 9–12 and 37–38; these read TGQV and RS. Position 93 (Arg93) interacts with phosphate. Cys123 serves as the catalytic Acyl-thioester intermediate. Gln150 provides a ligand contact to substrate. 153 to 154 contributes to the NADP(+) binding site; sequence SG. Lys220 serves as a coordination point for phosphate. Residue Arg242 coordinates substrate. His249 (proton acceptor) is an active-site residue. Asn316 contributes to the NADP(+) binding site.

This sequence belongs to the aspartate-semialdehyde dehydrogenase family. In terms of assembly, homodimer.

It carries out the reaction L-aspartate 4-semialdehyde + phosphate + NADP(+) = 4-phospho-L-aspartate + NADPH + H(+). It participates in amino-acid biosynthesis; L-lysine biosynthesis via DAP pathway; (S)-tetrahydrodipicolinate from L-aspartate: step 2/4. Its pathway is amino-acid biosynthesis; L-methionine biosynthesis via de novo pathway; L-homoserine from L-aspartate: step 2/3. The protein operates within amino-acid biosynthesis; L-threonine biosynthesis; L-threonine from L-aspartate: step 2/5. Its function is as follows. Catalyzes the NADPH-dependent formation of L-aspartate-semialdehyde (L-ASA) by the reductive dephosphorylation of L-aspartyl-4-phosphate. In Streptomyces akiyoshiensis, this protein is Aspartate-semialdehyde dehydrogenase.